We begin with the raw amino-acid sequence, 117 residues long: Large ribosomal subunit protein uL18 (117 aa).

This sequence belongs to the universal ribosomal protein uL18 family. Part of the 50S ribosomal subunit; part of the 5S rRNA/L5/L18/L25 subcomplex. Contacts the 5S and 23S rRNAs.

In terms of biological role, this is one of the proteins that bind and probably mediate the attachment of the 5S RNA into the large ribosomal subunit, where it forms part of the central protuberance. The protein is Large ribosomal subunit protein uL18 of Mycoplasma mobile (strain ATCC 43663 / 163K / NCTC 11711) (Mesomycoplasma mobile).